Reading from the N-terminus, the 504-residue chain is Probable periplasmic serine endoprotease DegP-like (504 aa).

Positions 1-26 (MLKTTTVAGLAAVLLTTGLPAEVAQS) are cleaved as a signal peptide. Residues 102 to 118 (RADRWRDRRGPRGEGRL) show a composition bias toward basic and acidic residues. Residues 102 to 122 (RADRWRDRRGPRGEGRLRPRA) form a disordered region. Residues 113-286 (RGEGRLRPRA…PASVAKDVVD (174 aa)) form a serine protease region. Residues histidine 140, aspartate 170, and serine 244 each act as charge relay system in the active site. Substrate is bound by residues 242–244 (GNS) and 299–303 (LGVQI). PDZ domains follow at residues 287-378 (SLIK…LWRS) and 401-491 (ATGE…IEAQ). 2 disordered regions span residues 389–411 (GTLP…DEGQ) and 428–447 (EDGK…AGDR).

This sequence belongs to the peptidase S1C family.

The protein resides in the periplasm. The catalysed reaction is Acts on substrates that are at least partially unfolded. The cleavage site P1 residue is normally between a pair of hydrophobic residues, such as Val-|-Val.. In terms of biological role, might be efficient in the degradation of transiently denatured and unfolded proteins which accumulate in the periplasm following stress conditions. In Rhizobium meliloti (strain 1021) (Ensifer meliloti), this protein is Probable periplasmic serine endoprotease DegP-like (degP1).